A 61-amino-acid chain; its full sequence is Small ribosomal subunit protein uS14 (61 aa).

Zn(2+) is bound by residues C24, C27, C40, and C43.

Belongs to the universal ribosomal protein uS14 family. Zinc-binding uS14 subfamily. In terms of assembly, part of the 30S ribosomal subunit. Contacts proteins S3 and S10. It depends on Zn(2+) as a cofactor.

Binds 16S rRNA, required for the assembly of 30S particles and may also be responsible for determining the conformation of the 16S rRNA at the A site. The chain is Small ribosomal subunit protein uS14 from Clostridium perfringens (strain ATCC 13124 / DSM 756 / JCM 1290 / NCIMB 6125 / NCTC 8237 / Type A).